Here is a 140-residue protein sequence, read N- to C-terminus: Transcription antitermination protein NusB (140 aa).

It belongs to the NusB family.

In terms of biological role, involved in transcription antitermination. Required for transcription of ribosomal RNA (rRNA) genes. Binds specifically to the boxA antiterminator sequence of the ribosomal RNA (rrn) operons. The sequence is that of Transcription antitermination protein NusB from Streptococcus pneumoniae (strain 70585).